A 103-amino-acid chain; its full sequence is Phosphoribosyl-ATP pyrophosphatase (103 aa).

Belongs to the PRA-PH family.

The protein resides in the cytoplasm. It catalyses the reaction 1-(5-phospho-beta-D-ribosyl)-ATP + H2O = 1-(5-phospho-beta-D-ribosyl)-5'-AMP + diphosphate + H(+). Its pathway is amino-acid biosynthesis; L-histidine biosynthesis; L-histidine from 5-phospho-alpha-D-ribose 1-diphosphate: step 2/9. In Cereibacter sphaeroides (strain ATCC 17029 / ATH 2.4.9) (Rhodobacter sphaeroides), this protein is Phosphoribosyl-ATP pyrophosphatase.